We begin with the raw amino-acid sequence, 659 residues long: tRNA-guanine(15) transglycosylase (659 aa).

The Nucleophile role is filled by Asp84. Substrate contacts are provided by Asp119 and Ala190. 3 residues coordinate Zn(2+): Cys273, Cys275, and Cys278. Residues 583-658 (KNRVVVNKDS…QAIKTRKGMK (76 aa)) enclose the PUA domain.

This sequence belongs to the archaeosine tRNA-ribosyltransferase family. The cofactor is Zn(2+).

It catalyses the reaction guanosine(15) in tRNA + 7-cyano-7-deazaguanine = 7-cyano-7-carbaguanosine(15) in tRNA + guanine. Its pathway is tRNA modification; archaeosine-tRNA biosynthesis. In terms of biological role, exchanges the guanine residue with 7-cyano-7-deazaguanine (preQ0) at position 15 in the dihydrouridine loop (D-loop) of archaeal tRNAs. The sequence is that of tRNA-guanine(15) transglycosylase from Methanobrevibacter smithii (strain ATCC 35061 / DSM 861 / OCM 144 / PS).